The primary structure comprises 270 residues: Putative phosphoenolpyruvate synthase regulatory protein (270 aa).

Residue 150-157 coordinates ADP; sequence GVSRCGKT.

Belongs to the pyruvate, phosphate/water dikinase regulatory protein family. PSRP subfamily.

It catalyses the reaction [pyruvate, water dikinase] + ADP = [pyruvate, water dikinase]-phosphate + AMP + H(+). The enzyme catalyses [pyruvate, water dikinase]-phosphate + phosphate + H(+) = [pyruvate, water dikinase] + diphosphate. Its function is as follows. Bifunctional serine/threonine kinase and phosphorylase involved in the regulation of the phosphoenolpyruvate synthase (PEPS) by catalyzing its phosphorylation/dephosphorylation. The polypeptide is Putative phosphoenolpyruvate synthase regulatory protein (Shewanella putrefaciens (strain CN-32 / ATCC BAA-453)).